A 601-amino-acid polypeptide reads, in one-letter code: COP9 signalosome complex subunit 1 (601 aa).

The span at 1–10 (MQNELLDDPM) shows a compositional bias: acidic residues. Disordered regions lie at residues 1 to 54 (MQNE…LDNP) and 268 to 294 (DADDAEKNSQQSQQAPPQRGENAPYMV). Over residues 14–24 (APAAEAAAADE) the composition is skewed to low complexity. Residues 338 to 500 (TILQIKTECL…GIVRILDERD (163 aa)) enclose the PCI domain. The tract at residues 535-581 (SISDKETRPKRKNQKESAKFDRNFGGIDVDEDPRGIAGPSGLSDDFN) is disordered.

The protein belongs to the CSN1 family. Component of the CSN complex, probably composed of csn-1, csn-2, csn-3, csn-4, csn-5, csn-6 and csn-7. Within the complex it probably interacts directly with csn-2, csn-4 and csn-5. May interact with itself. Interacts with rbx-1.

The protein localises to the cytoplasm. The protein resides in the nucleus. In terms of biological role, essential component of the COP9 signalosome complex (CSN), a complex involved in various cellular and developmental processes. The CSN complex is an essential regulator of the ubiquitin (Ubl) conjugation pathway by mediating the deneddylation of the cullin subunits of the SCF-type E3 ligase complexes, leading to decrease the Ubl ligase activity of SCF. The CSN complex plays an essential role in embryogenesis and oogenesis and is required to regulate microtubule stability in the early embryo. Mediates mei-3/katanin targeting for degradation at the meiosis to mitosis transition via deneddylation of cul-3. The protein is COP9 signalosome complex subunit 1 (csn-1) of Caenorhabditis elegans.